We begin with the raw amino-acid sequence, 391 residues long: Phosphoglycerate kinase (391 aa).

Substrate is bound by residues 21–23 (DLN), arginine 36, 59–62 (HLGR), arginine 113, and arginine 146. Residues lysine 197, glutamate 319, and 345-348 (GGDT) contribute to the ATP site.

The protein belongs to the phosphoglycerate kinase family. In terms of assembly, monomer.

Its subcellular location is the cytoplasm. The enzyme catalyses (2R)-3-phosphoglycerate + ATP = (2R)-3-phospho-glyceroyl phosphate + ADP. It participates in carbohydrate degradation; glycolysis; pyruvate from D-glyceraldehyde 3-phosphate: step 2/5. This chain is Phosphoglycerate kinase, found in Shewanella sediminis (strain HAW-EB3).